Here is a 241-residue protein sequence, read N- to C-terminus: Sensory transduction protein LytT (241 aa).

The Response regulatory domain maps to 3-117 (RVLIVDDEML…RIQQTLKKYK (115 aa)). Residue Asp54 is modified to 4-aspartylphosphate. One can recognise an HTH LytTR-type domain in the interval 137 to 241 (LALSVGESIV…AKELKKLLHI (105 aa)).

In terms of processing, phosphorylated by LytS.

It localises to the cytoplasm. In terms of biological role, member of the two-component regulatory system LytS/LytT that probably regulates genes involved in cell wall metabolism. This chain is Sensory transduction protein LytT (lytT), found in Bacillus subtilis (strain 168).